Here is a 134-residue protein sequence, read N- to C-terminus: uncharacterized protein (134 aa).

Residues 1 to 37 (MSYIKRDHTALRDIAMKTFLKVVGLAASLSAASVAFS) form the signal peptide.

This is an uncharacterized protein from Coxiella burnetii (strain RSA 493 / Nine Mile phase I).